A 421-amino-acid chain; its full sequence is Serine hydroxymethyltransferase (421 aa).

Residues Leu-123 and 127–129 (GHL) each bind (6S)-5,6,7,8-tetrahydrofolate. Lys-232 carries the N6-(pyridoxal phosphate)lysine modification.

This sequence belongs to the SHMT family. As to quaternary structure, homodimer. Pyridoxal 5'-phosphate is required as a cofactor.

It localises to the cytoplasm. It carries out the reaction (6R)-5,10-methylene-5,6,7,8-tetrahydrofolate + glycine + H2O = (6S)-5,6,7,8-tetrahydrofolate + L-serine. It participates in one-carbon metabolism; tetrahydrofolate interconversion. It functions in the pathway amino-acid biosynthesis; glycine biosynthesis; glycine from L-serine: step 1/1. Functionally, catalyzes the reversible interconversion of serine and glycine with tetrahydrofolate (THF) serving as the one-carbon carrier. This reaction serves as the major source of one-carbon groups required for the biosynthesis of purines, thymidylate, methionine, and other important biomolecules. Also exhibits THF-independent aldolase activity toward beta-hydroxyamino acids, producing glycine and aldehydes, via a retro-aldol mechanism. The sequence is that of Serine hydroxymethyltransferase from Ehrlichia ruminantium (strain Gardel).